Consider the following 304-residue polypeptide: GMP synthase [glutamine-hydrolyzing] subunit B (304 aa).

In terms of domain architecture, GMPS ATP-PPase spans 2–183 (VKVEKFIPNA…LDLPEEICER (182 aa)). Position 28–34 (28–34 (SGGVDSS)) interacts with ATP.

In terms of assembly, heterodimer composed of a glutamine amidotransferase subunit (A) and a GMP-binding subunit (B).

The catalysed reaction is XMP + L-glutamine + ATP + H2O = GMP + L-glutamate + AMP + diphosphate + 2 H(+). The protein operates within purine metabolism; GMP biosynthesis; GMP from XMP (L-Gln route): step 1/1. Functionally, catalyzes the synthesis of GMP from XMP. This is GMP synthase [glutamine-hydrolyzing] subunit B from Methanococcoides burtonii (strain DSM 6242 / NBRC 107633 / OCM 468 / ACE-M).